A 143-amino-acid polypeptide reads, in one-letter code: FAD synthase (143 aa).

Residues Thr-13–Phe-14, His-18–His-21, and Asp-96 contribute to the ATP site.

The protein belongs to the archaeal FAD synthase family. In terms of assembly, homodimer. It depends on a divalent metal cation as a cofactor.

The catalysed reaction is FMN + ATP + H(+) = FAD + diphosphate. The protein operates within cofactor biosynthesis; FAD biosynthesis; FAD from FMN: step 1/1. Functionally, catalyzes the transfer of the AMP portion of ATP to flavin mononucleotide (FMN) to produce flavin adenine dinucleotide (FAD) coenzyme. This chain is FAD synthase, found in Methanothrix thermoacetophila (strain DSM 6194 / JCM 14653 / NBRC 101360 / PT) (Methanosaeta thermophila).